Reading from the N-terminus, the 365-residue chain is Protein BIIDXI (365 aa).

The signal sequence occupies residues 1–21 (MKEMGVIVLLLLHSFFYVAFC). Asparagine 48, asparagine 121, and asparagine 208 each carry an N-linked (GlcNAc...) asparagine glycan.

In terms of assembly, interacts with PME3. As to expression, mainly expressed in vascular tissues of roots, leaves, stamens and petals.

Its subcellular location is the secreted. It is found in the cell wall. In terms of biological role, together with At5g11420, acts as a positive regulator of PME3 activity during several developmental processes, including reproductive organ development, hypocotyls elongation, seed germination and endosperm (testa) rupture at the micropyle, probably by modulating the pectin methylation status in cell walls. Involved in the regulation of pectin methylation degree to modulate cell wall physiology during cell separation, hypocotyl growth and embryo development. Required during embryo development, especially to regulate homogalacturonans (HG) methyl esterification in endosperm cell walls, a process related to embryo bending. Also implicated in hypocotyl growth and gravitropic response via the regulation of auxin efflux. Also regulates cell wall pectin upon root-knot nematode Meloidogyne incognita infection. This chain is Protein BIIDXI, found in Arabidopsis thaliana (Mouse-ear cress).